Here is a 500-residue protein sequence, read N- to C-terminus: L-arabinose isomerase (500 aa).

Mn(2+) contacts are provided by Glu-306, Glu-333, His-350, and His-450.

The protein belongs to the arabinose isomerase family. As to quaternary structure, homohexamer. The cofactor is Mn(2+).

The catalysed reaction is beta-L-arabinopyranose = L-ribulose. The protein operates within carbohydrate degradation; L-arabinose degradation via L-ribulose; D-xylulose 5-phosphate from L-arabinose (bacterial route): step 1/3. Catalyzes the conversion of L-arabinose to L-ribulose. The sequence is that of L-arabinose isomerase from Salmonella paratyphi A (strain ATCC 9150 / SARB42).